We begin with the raw amino-acid sequence, 260 residues long: Aspartate/glutamate leucyltransferase (260 aa).

The protein belongs to the R-transferase family. Bpt subfamily.

Its subcellular location is the cytoplasm. The catalysed reaction is N-terminal L-glutamyl-[protein] + L-leucyl-tRNA(Leu) = N-terminal L-leucyl-L-glutamyl-[protein] + tRNA(Leu) + H(+). It catalyses the reaction N-terminal L-aspartyl-[protein] + L-leucyl-tRNA(Leu) = N-terminal L-leucyl-L-aspartyl-[protein] + tRNA(Leu) + H(+). Its function is as follows. Functions in the N-end rule pathway of protein degradation where it conjugates Leu from its aminoacyl-tRNA to the N-termini of proteins containing an N-terminal aspartate or glutamate. The sequence is that of Aspartate/glutamate leucyltransferase from Sphingomonas elodea.